The chain runs to 308 residues: tRNA dimethylallyltransferase (308 aa).

An ATP-binding site is contributed by 16–23 (GPTASGKT). Position 18 to 23 (18 to 23 (TASGKT)) interacts with substrate. An interaction with substrate tRNA region spans residues 41–44 (DSQQ).

This sequence belongs to the IPP transferase family. As to quaternary structure, monomer. Requires Mg(2+) as cofactor.

The catalysed reaction is adenosine(37) in tRNA + dimethylallyl diphosphate = N(6)-dimethylallyladenosine(37) in tRNA + diphosphate. Catalyzes the transfer of a dimethylallyl group onto the adenine at position 37 in tRNAs that read codons beginning with uridine, leading to the formation of N6-(dimethylallyl)adenosine (i(6)A). This chain is tRNA dimethylallyltransferase, found in Myxococcus xanthus (strain DK1622).